We begin with the raw amino-acid sequence, 463 residues long: Glutamate--tRNA ligase (463 aa).

The 'HIGH' region signature appears at 9–19; it reads PSPTGYLHVGG. Over residues 115 to 129 the composition is skewed to basic and acidic residues; sequence AGEKPRYDGTWRPEA. The segment at 115 to 136 is disordered; the sequence is AGEKPRYDGTWRPEAGKTLPAI. The 'KMSKS' region motif lies at 241–245; it reads KLSKR. Lys-244 lines the ATP pocket.

The protein belongs to the class-I aminoacyl-tRNA synthetase family. Glutamate--tRNA ligase type 1 subfamily. Monomer.

It localises to the cytoplasm. The enzyme catalyses tRNA(Glu) + L-glutamate + ATP = L-glutamyl-tRNA(Glu) + AMP + diphosphate. Catalyzes the attachment of glutamate to tRNA(Glu) in a two-step reaction: glutamate is first activated by ATP to form Glu-AMP and then transferred to the acceptor end of tRNA(Glu). This chain is Glutamate--tRNA ligase, found in Janthinobacterium sp. (strain Marseille) (Minibacterium massiliensis).